A 139-amino-acid chain; its full sequence is Glutamate mutase sigma subunit (139 aa).

The B12-binding domain maps to 4–139 (KIKLVLGVIG…DLHADFPDHA (136 aa)). Adenosylcob(III)alamin contacts are provided by residues 14 to 18 (SDCHA), H17, 62 to 64 (SSL), and 94 to 98 (NIVVG).

Belongs to the methylaspartate mutase GlmS subunit family. Heterotetramer composed of 2 epsilon subunits (GlmE) and 2 sigma subunits (GlmS). GlmE exists as a homodimer and GlmS as a monomer. Adenosylcob(III)alamin serves as cofactor.

The enzyme catalyses (2S,3S)-3-methyl-L-aspartate = L-glutamate. It functions in the pathway amino-acid degradation; L-glutamate degradation via mesaconate pathway; acetate and pyruvate from L-glutamate: step 1/4. Functionally, catalyzes the carbon skeleton rearrangement of L-glutamate to L-threo-3-methylaspartate ((2S,3S)-3-methylaspartate). The protein is Glutamate mutase sigma subunit of Treponema denticola (strain ATCC 35405 / DSM 14222 / CIP 103919 / JCM 8153 / KCTC 15104).